Here is a 266-residue protein sequence, read N- to C-terminus: Trehalose-6-phosphate phosphatase (266 aa).

Aspartate 20 serves as the catalytic Nucleophile. The Mg(2+) site is built by aspartate 20, aspartate 22, and aspartate 198. 20–22 (DLD) is a binding site for substrate.

The protein belongs to the trehalose phosphatase family. The cofactor is Mg(2+). Mn(2+) serves as cofactor. Co(2+) is required as a cofactor. Requires Zn(2+) as cofactor.

The enzyme catalyses alpha,alpha-trehalose 6-phosphate + H2O = alpha,alpha-trehalose + phosphate. Its pathway is glycan biosynthesis; trehalose biosynthesis. In terms of biological role, removes the phosphate from trehalose 6-phosphate (Tre6P) to produce free trehalose. Also catalyzes the dephosphorylation of glucose-6-phosphate (Glu6P) and 2-deoxyglucose-6-phosphate (2dGlu6P). The protein is Trehalose-6-phosphate phosphatase (otsB) of Escherichia coli (strain K12).